The chain runs to 447 residues: Adenylosuccinate synthetase (447 aa).

Residues 35–41 (GDEGKGK) and 63–65 (GHT) contribute to the GTP site. Residue Asp36 is the Proton acceptor of the active site. Mg(2+)-binding residues include Asp36 and Gly63. Residues 36-39 (DEGK), 61-64 (NAGH), Thr153, Arg167, Asn245, Thr260, and Arg324 contribute to the IMP site. His64 acts as the Proton donor in catalysis. 320 to 326 (VTTKRKR) lines the substrate pocket. Residues Arg326, 352–354 (KLD), and 435–437 (GVG) contribute to the GTP site.

It belongs to the adenylosuccinate synthetase family. In terms of assembly, homodimer. Mg(2+) is required as a cofactor.

The protein resides in the cytoplasm. The enzyme catalyses IMP + L-aspartate + GTP = N(6)-(1,2-dicarboxyethyl)-AMP + GDP + phosphate + 2 H(+). The protein operates within purine metabolism; AMP biosynthesis via de novo pathway; AMP from IMP: step 1/2. Its function is as follows. Plays an important role in the de novo pathway and in the salvage pathway of purine nucleotide biosynthesis. Catalyzes the first committed step in the biosynthesis of AMP from IMP. Plays a role in the regulation of adult life span. This chain is Adenylosuccinate synthetase, found in Drosophila melanogaster (Fruit fly).